Consider the following 156-residue polypeptide: Peptide methionine sulfoxide reductase MsrA (156 aa).

Cysteine 10 is an active-site residue.

It belongs to the MsrA Met sulfoxide reductase family.

The catalysed reaction is L-methionyl-[protein] + [thioredoxin]-disulfide + H2O = L-methionyl-(S)-S-oxide-[protein] + [thioredoxin]-dithiol. It carries out the reaction [thioredoxin]-disulfide + L-methionine + H2O = L-methionine (S)-S-oxide + [thioredoxin]-dithiol. In terms of biological role, has an important function as a repair enzyme for proteins that have been inactivated by oxidation. Catalyzes the reversible oxidation-reduction of methionine sulfoxide in proteins to methionine. The polypeptide is Peptide methionine sulfoxide reductase MsrA (Acidobacterium capsulatum (strain ATCC 51196 / DSM 11244 / BCRC 80197 / JCM 7670 / NBRC 15755 / NCIMB 13165 / 161)).